The primary structure comprises 308 residues: Ribonuclease HIII (308 aa).

The 218-residue stretch at 91–308 (KNVIGSDEVG…TEKALKMVKK (218 aa)) folds into the RNase H type-2 domain. Positions 97, 98, and 202 each coordinate a divalent metal cation.

It belongs to the RNase HII family. RnhC subfamily. Mn(2+) is required as a cofactor. The cofactor is Mg(2+).

The protein localises to the cytoplasm. The enzyme catalyses Endonucleolytic cleavage to 5'-phosphomonoester.. Functionally, endonuclease that specifically degrades the RNA of RNA-DNA hybrids. The polypeptide is Ribonuclease HIII (Listeria monocytogenes serovar 1/2a (strain ATCC BAA-679 / EGD-e)).